The following is a 112-amino-acid chain: Peptidyl-tRNA hydrolase (112 aa).

It belongs to the PTH2 family.

It localises to the cytoplasm. It carries out the reaction an N-acyl-L-alpha-aminoacyl-tRNA + H2O = an N-acyl-L-amino acid + a tRNA + H(+). In terms of biological role, the natural substrate for this enzyme may be peptidyl-tRNAs which drop off the ribosome during protein synthesis. The polypeptide is Peptidyl-tRNA hydrolase (Haloquadratum walsbyi (strain DSM 16790 / HBSQ001)).